The sequence spans 145 residues: Cuticle protein 65 (145 aa).

Tandem repeats lie at residues 27-30 (AAPA), 33-37 (AAPAV), 39-42 (AAPA), 86-89 (AAPV), 92-95 (AAPA), 98-101 (AAPA), and 123-126 (AAPA).

Its function is as follows. Component of the cuticle of migratory locust which contains more than 100 different structural proteins. The polypeptide is Cuticle protein 65 (Locusta migratoria (Migratory locust)).